The chain runs to 317 residues: 1-phosphatidylinositol phosphodiesterase (317 aa).

The N-terminal stretch at Met1 to Thr22 is a signal peptide. Residues Leu58–Leu196 enclose the PI-PLC X-box domain. His67 serves as the catalytic Proton acceptor. His115 serves as the catalytic Proton donor.

As to quaternary structure, monomer.

The protein localises to the secreted. It localises to the cytoplasm. It carries out the reaction a 1,2-diacyl-sn-glycero-3-phospho-(1D-myo-inositol) = 1D-myo-inositol 1,2-cyclic phosphate + a 1,2-diacyl-sn-glycerol. Cleaves glycosylphosphatidylinositol (GPI) and phosphatidylinositol (PI) anchors but not PI phosphates. Important factor in pathogenesis, PI-PLC activity is present only in virulent listeria species. It may participate in the lysis of the phagolysosomal membrane. The polypeptide is 1-phosphatidylinositol phosphodiesterase (plcA) (Listeria monocytogenes serovar 1/2a (strain ATCC BAA-679 / EGD-e)).